A 699-amino-acid polypeptide reads, in one-letter code: Serine/threonine-protein kinase PRR2 (699 aa).

The interval 168–193 (SSTKKNLANDISDNKHNNNSSNTIGH) is disordered. Polar residues predominate over residues 184–193 (NNNSSNTIGH). One can recognise a Protein kinase domain in the interval 361–653 (RDLDVVLGEG…INGILQDGWI (293 aa)). ATP-binding positions include 367 to 375 (LGEGSGGKV) and K390. Catalysis depends on D484, which acts as the Proton acceptor.

The protein belongs to the protein kinase superfamily. Ser/Thr protein kinase family.

It carries out the reaction L-seryl-[protein] + ATP = O-phospho-L-seryl-[protein] + ADP + H(+). The catalysed reaction is L-threonyl-[protein] + ATP = O-phospho-L-threonyl-[protein] + ADP + H(+). In terms of biological role, protein kinase that functions as a regulator in the pheromone-induced mating pathway downstream of mitogen-activated protein kinase (MAPK) FUS3. Diminishes transcriptional induction of genes in response to pheromone signaling. This is Serine/threonine-protein kinase PRR2 (PRR2) from Saccharomyces cerevisiae (strain ATCC 204508 / S288c) (Baker's yeast).